The sequence spans 706 residues: Fatty acid oxidation complex subunit alpha (706 aa).

Residues 1 to 188 form an enoyl-CoA hydratase region; it reads MEKTFNLTRR…KMGLVNDVVP (188 aa). Residues 308-706 are 3-hydroxyacyl-CoA dehydrogenase; it reads RKVKKAVILG…TMARENVSFF (399 aa).

The protein in the N-terminal section; belongs to the enoyl-CoA hydratase/isomerase family. This sequence in the central section; belongs to the 3-hydroxyacyl-CoA dehydrogenase family. As to quaternary structure, heterotetramer of two alpha chains (FadJ) and two beta chains (FadI).

It is found in the cytoplasm. It carries out the reaction a (3S)-3-hydroxyacyl-CoA = a (2E)-enoyl-CoA + H2O. The enzyme catalyses a 4-saturated-(3S)-3-hydroxyacyl-CoA = a (3E)-enoyl-CoA + H2O. The catalysed reaction is a (3S)-3-hydroxyacyl-CoA + NAD(+) = a 3-oxoacyl-CoA + NADH + H(+). It catalyses the reaction (3S)-3-hydroxybutanoyl-CoA = (3R)-3-hydroxybutanoyl-CoA. The protein operates within lipid metabolism; fatty acid beta-oxidation. Functionally, catalyzes the formation of a hydroxyacyl-CoA by addition of water on enoyl-CoA. Also exhibits 3-hydroxyacyl-CoA epimerase and 3-hydroxyacyl-CoA dehydrogenase activities. This is Fatty acid oxidation complex subunit alpha from Shewanella putrefaciens (strain CN-32 / ATCC BAA-453).